Here is a 187-residue protein sequence, read N- to C-terminus: Large ribosomal subunit protein eL18x (187 aa).

Residues 150–187 (HFGPAPGVPHSNTKPYVRHKGRKFEKARGKRKSRGFKV) are disordered. The span at 165–187 (YVRHKGRKFEKARGKRKSRGFKV) shows a compositional bias: basic residues.

It belongs to the eukaryotic ribosomal protein eL18 family.

This chain is Large ribosomal subunit protein eL18x (RPL18C), found in Arabidopsis thaliana (Mouse-ear cress).